The following is a 275-amino-acid chain: NH(3)-dependent NAD(+) synthetase (275 aa).

46–53 (GISGGQDS) lines the ATP pocket. Residue Asp52 coordinates Mg(2+). Residue Arg140 coordinates deamido-NAD(+). Position 160 (Thr160) interacts with ATP. Residue Glu165 coordinates Mg(2+). Positions 173 and 180 each coordinate deamido-NAD(+). The ATP site is built by Lys189 and Thr211. 260–261 (HK) lines the deamido-NAD(+) pocket.

This sequence belongs to the NAD synthetase family. Homodimer.

The enzyme catalyses deamido-NAD(+) + NH4(+) + ATP = AMP + diphosphate + NAD(+) + H(+). It functions in the pathway cofactor biosynthesis; NAD(+) biosynthesis; NAD(+) from deamido-NAD(+) (ammonia route): step 1/1. Its function is as follows. Catalyzes the ATP-dependent amidation of deamido-NAD to form NAD. Uses ammonia as a nitrogen source. This chain is NH(3)-dependent NAD(+) synthetase, found in Shigella boydii serotype 4 (strain Sb227).